The following is a 92-amino-acid chain: MQVSTAALAVLLCTMALCNQFSASLAADTPTACCFSYTSRQIPQNFIADYFETSSQCSKPGVIFLTKRSRQVCADPSEEWVQKYVSDLELSA.

An N-terminal signal peptide occupies residues Met-1–Ala-23. Disulfide bonds link Cys-33–Cys-57 and Cys-34–Cys-73.

This sequence belongs to the intercrine beta (chemokine CC) family. Self-associates. Also heterodimer of MIP-1-alpha(4-69) and MIP-1-beta(3-69). Interacts with CCR1. Post-translationally, N-terminal processed form LD78-alpha(4-69) is produced by proteolytic cleavage after secretion from HTLV1-transformed T-cells.

It localises to the secreted. Monokine with inflammatory and chemokinetic properties. Binds to CCR1, CCR4 and CCR5. One of the major HIV-suppressive factors produced by CD8+ T-cells. Recombinant MIP-1-alpha induces a dose-dependent inhibition of different strains of HIV-1, HIV-2, and simian immunodeficiency virus (SIV). This is C-C motif chemokine 3 (CCL3) from Homo sapiens (Human).